The chain runs to 181 residues: ATP-dependent protease subunit HslV (181 aa).

The active site involves threonine 7. Na(+)-binding residues include alanine 166, cysteine 169, and threonine 172.

The protein belongs to the peptidase T1B family. HslV subfamily. In terms of assembly, a double ring-shaped homohexamer of HslV is capped on each side by a ring-shaped HslU homohexamer. The assembly of the HslU/HslV complex is dependent on binding of ATP.

Its subcellular location is the cytoplasm. The enzyme catalyses ATP-dependent cleavage of peptide bonds with broad specificity.. Its activity is regulated as follows. Allosterically activated by HslU binding. Protease subunit of a proteasome-like degradation complex believed to be a general protein degrading machinery. The sequence is that of ATP-dependent protease subunit HslV from Anaeromyxobacter dehalogenans (strain 2CP-C).